The sequence spans 296 residues: tRNA dimethylallyltransferase (296 aa).

Residue 9-16 (GTTASGKS) coordinates ATP. 11–16 (TASGKS) provides a ligand contact to substrate. The interaction with substrate tRNA stretch occupies residues 34 to 37 (DSLA).

This sequence belongs to the IPP transferase family. As to quaternary structure, monomer. It depends on Mg(2+) as a cofactor.

The catalysed reaction is adenosine(37) in tRNA + dimethylallyl diphosphate = N(6)-dimethylallyladenosine(37) in tRNA + diphosphate. Catalyzes the transfer of a dimethylallyl group onto the adenine at position 37 in tRNAs that read codons beginning with uridine, leading to the formation of N6-(dimethylallyl)adenosine (i(6)A). This Campylobacter curvus (strain 525.92) protein is tRNA dimethylallyltransferase.